The chain runs to 864 residues: E3 ubiquitin-protein ligase Itchy (864 aa).

The C2 domain occupies 1-115 (MSDSGPQLDS…LKSNNMKLEE (115 aa)). N-acetylserine is present on Ser2. Positions 151-164 (NGETSCSESTTQND) are enriched in polar residues. Residues 151–294 (NGETSCSEST…SQAPLPPGWE (144 aa)) form a disordered region. Basic and acidic residues predominate over residues 165–174 (DGCRTRDDTR). Low complexity predominate over residues 195 to 206 (NGNNSPSLSNGG). Ser199 is subject to Phosphoserine; by MAPK8. Over residues 210 to 224 (SRPPRPSRPPPPTPR) the composition is skewed to pro residues. Position 222 is a phosphothreonine; by MAPK8 (Thr222). The span at 230–259 (NGSPSTNSDSDGSSTGSLPPTNTNVNTSTS) shows a compositional bias: low complexity. A Phosphoserine; by MAPK8 modification is found at Ser232. 2 consecutive WW domains span residues 287 to 320 (APLPPGWEQRVDQHGRVYYVDHVEKRTTWDRPEP) and 319 to 352 (EPLPPGWERRVDNMGRIYYVDHFTRTTTWQRPTL). Phosphothreonine; by SGK3 is present on Thr346. The tract at residues 356-432 (RNYEQWQLQR…RITQWEDPRS (77 aa)) is required for interaction with FYN. Phosphotyrosine; by FYN is present on Tyr381. 2 WW domains span residues 399–432 (GPLPPGWEKRTDSNGRVYFVNHNTRITQWEDPRS) and 439–472 (KPLPEGWEMRFTVDGIPYFVDHNRRATTYIDPRT). Ser411 bears the Phosphoserine; by SGK3 mark. The HECT domain occupies 530 to 864 (SPQDLRRRLW…IEETEGFGQE (335 aa)). Residues 535–544 (RRRLWVIFPG) are MAP kinase docking site. The Glycyl thioester intermediate role is filled by Cys832.

As to quaternary structure, monomer. Part of a ternary complex composed of SMAD3, ITCH/AIP4 and NEDD9/HEF1; within the complex NEDD9/HEF1 interacts (via N-terminus) with ITCH/AIP4 (via WW domains); the complex mediates ubiquitination and proteasomal degradation of NEDD9/HEF1. Interacts (via WW domains) with OCNL. Interacts (via WW domains) with NOTCH1. Interacts (via WW domains) JUN. Interacts with JUNB; the interaction promotes ITCH-mediated ubiquitination and degradation of JUNB. Interacts with FYN; the interaction phosphorylates ITCH on Tyr-381 decreasing binding of JUNB. Interacts (via WW domain 2) with N4BP1; the interaction inhibits the E3 ubiquitin-protein ligase activity. Interacts with NDFIP1 and NDFIP2; the interaction with NDFIP proteins activates the E3 ubiquitin-protein ligase and may induce its recruitment to exosomes. Interacts with ARHGEF7. Interacts with RNF11. Interacts (via the WW 1 domain) with NFE2 (via the PXY motif 1); the interaction promotes 'Lys-63'-linked ubiquitination of NFE2, retains it in the cytoplasm and prevents its transactivation activity. Interacts (via WW domains) with CXCR4 (via C-terminus); the interaction depends on CXCR4 phosphorylation. Found in a complex with E3 ligase DTX3L and ESCRT-0 components HGS and STAM. Interacts with DTX3L (via C-terminus); the interaction is increased upon CXCL12 stimulation and inhibits ITCH catalytic activity (the interaction is direct). Interacts with HGS. Interacts (via WW domains) with PCBP2 within a complex containing ITCH, MAVS and PCBP2. Interacts (via WW domains) with TXNIP (via C-terminus). Interacts with p15 BID. Interacts with ERBB4. Interacts with DTX1. Interacts with SPART. Interacts with SNX9 and SNX18. Interacts (via its WW domains) with ATN1. Interacts (via WW domains) with SGK3. Interacts with CBLC. Interacts with OTUD7B. Interacts (via WW domain 1,2 and 3) with PI4K2A; the interaction inhibits PI4K2A catalytic activity and promotes ITCH catalytic activity. Interacts with ARRDC4. Part of a complex containing ITCH, NDFIP1 and MAP3K7. Interacts with UBE2L3; the interaction is mediated by NDFIP1. Interacts with MAPK8/JNK1. Interacts (via WW domains) with ARRDC1 (via PPxY motifs); the interaction is direct and participates in the recruitment of the ubiquitin-protein ligase ITCH to the NOTCH1 receptor. Interacts (via WW domains) with ARRDC2. Interacts (via WW domains) with ARRDC3. Interacts directly with LDLRAD3; this interaction promotes ITCH auto-ubiquitination leading to its degradation. Interacts with ENTREP1; enhances the ubiquitination of CXCR4 by ITCH and its subsequent endocytosis. Interacts with USP12 and WDR48/UAF1; the interaction is more efficient when both USP12 and WDR48/UAF1 are involved and may facilitate the recruitment of the USP12 deubiquitinase complex to Notch. In terms of assembly, (Microbial infection) Interacts with Epstein-Barr virus LMP2A. On T-cell activation, phosphorylation by the JNK cascade on serine and threonine residues surrounding the PRR domain accelerates the ubiquitination and degradation of JUN and JUNB. The increased ITCH catalytic activity due to phosphorylation by JNK1 may occur due to a conformational change disrupting the interaction between the PRR/WW motifs domain and the HECT domain and, thus exposing the HECT domain. Phosphorylation by FYN reduces interaction with JUNB and negatively controls JUN ubiquitination and degradation. Interacts directly with LDLRAD3; this interaction promotes ITCH auto-ubiquitination leading to its degradation. Post-translationally, monoubiquitinated. Autopolyubiquitinated with 'Lys-63' linkages which does not lead to protein degradation. In terms of tissue distribution, detected in uterus (at protein level). Widely expressed.

It localises to the cell membrane. It is found in the cytoplasm. The protein resides in the nucleus. Its subcellular location is the early endosome membrane. The protein localises to the endosome membrane. It catalyses the reaction S-ubiquitinyl-[E2 ubiquitin-conjugating enzyme]-L-cysteine + [acceptor protein]-L-lysine = [E2 ubiquitin-conjugating enzyme]-L-cysteine + N(6)-ubiquitinyl-[acceptor protein]-L-lysine.. The protein operates within protein modification; protein ubiquitination. Activated by NDFIP1- and NDFIP2-binding. Activated by PI4K2A-binding. Inhibited by DTX3L-binding. Inhibited by N4BP1 binding. Functionally, acts as an E3 ubiquitin-protein ligase which accepts ubiquitin from an E2 ubiquitin-conjugating enzyme in the form of a thioester and then directly transfers the ubiquitin to targeted substrates. It catalyzes 'Lys-29'-, 'Lys-48'- and 'Lys-63'-linked ubiquitin conjugation. Involved in the control of inflammatory signaling pathways. Is an essential component of a ubiquitin-editing protein complex, comprising also TNFAIP3, TAX1BP1 and RNF11, that ensures the transient nature of inflammatory signaling pathways. Promotes the association of the complex after TNF stimulation. Once the complex is formed, TNFAIP3 deubiquitinates 'Lys-63' polyubiquitin chains on RIPK1 and catalyzes the formation of 'Lys-48'-polyubiquitin chains. This leads to RIPK1 proteasomal degradation and consequently termination of the TNF- or LPS-mediated activation of NFKB1. Ubiquitinates RIPK2 by 'Lys-63'-linked conjugation and influences NOD2-dependent signal transduction pathways. Regulates the transcriptional activity of several transcription factors involved in immune response. Ubiquitinates NFE2 by 'Lys-63' linkages and is implicated in the control of the development of hematopoietic lineages. Mediates JUN ubiquitination and degradation. Mediates JUNB ubiquitination and degradation. Critical regulator of type 2 helper T (Th2) cell cytokine production by inducing JUNB ubiquitination and degradation. Involved in the negative regulation of MAVS-dependent cellular antiviral responses. Ubiquitinates MAVS through 'Lys-48'-linked conjugation resulting in MAVS proteasomal degradation. Following ligand stimulation, regulates sorting of Wnt receptor FZD4 to the degradative endocytic pathway probably by modulating PI42KA activity. Ubiquitinates PI4K2A and negatively regulates its catalytic activity. Ubiquitinates chemokine receptor CXCR4 and regulates sorting of CXCR4 to the degradative endocytic pathway following ligand stimulation by ubiquitinating endosomal sorting complex required for transport ESCRT-0 components HGS and STAM. Targets DTX1 for lysosomal degradation and controls NOTCH1 degradation, in the absence of ligand, through 'Lys-29'-linked polyubiquitination. Ubiquitinates SNX9. Ubiquitinates MAP3K7 through 'Lys-48'-linked conjugation. Together with UBR5, involved in the regulation of apoptosis and reactive oxygen species levels through the ubiquitination and proteasomal degradation of TXNIP: catalyzes 'Lys-48'-/'Lys-63'-branched ubiquitination of TXNIP. ITCH synthesizes 'Lys-63'-linked chains, while UBR5 is branching multiple 'Lys-48'-linked chains of substrate initially modified. Mediates the antiapoptotic activity of epidermal growth factor through the ubiquitination and proteasomal degradation of p15 BID. Ubiquitinates BRAT1 and this ubiquitination is enhanced in the presence of NDFIP1. Ubiquitinates NEDD9/HEF1, resulting in proteasomal degradation of NEDD9/HEF1. The polypeptide is E3 ubiquitin-protein ligase Itchy (Itch) (Mus musculus (Mouse)).